We begin with the raw amino-acid sequence, 124 residues long: Fluoride-specific ion channel FluC 2 (124 aa).

Transmembrane regions (helical) follow at residues 1–21 (MSDI…RFQI), 34–54 (FLIL…LSLV), 66–86 (LILF…SFVY), and 103–123 (LFII…FLGT). Residues glycine 76 and serine 79 each coordinate Na(+).

The protein belongs to the fluoride channel Fluc/FEX (TC 1.A.43) family.

It localises to the cell inner membrane. It catalyses the reaction fluoride(in) = fluoride(out). With respect to regulation, na(+) is not transported, but it plays an essential structural role and its presence is essential for fluoride channel function. In terms of biological role, fluoride-specific ion channel. Important for reducing fluoride concentration in the cell, thus reducing its toxicity. This is Fluoride-specific ion channel FluC 2 from Prochlorococcus marinus (strain NATL2A).